The chain runs to 264 residues: Osteopontin (264 aa).

Positions 1–16 (MKLAFLCLCFISIAAA) are cleaved as a signal peptide. Disordered regions lie at residues 21-141 (KSRQ…RGDS) and 166-264 (IEDD…EVTR). Residues 31 to 51 (SEEKYDPRSHHTHRYHQDHVD) show a composition bias toward basic and acidic residues. Positions 52 to 73 (SQSQEHLQQTQNDLASLQQTHY) are enriched in polar residues. Positions 97–118 (AVDDDDDDDNDSNDTDESDEVV) are enriched in acidic residues. N106 and N109 each carry an N-linked (GlcNAc...) asparagine glycan. A Cell attachment site motif is present at residues 132-134 (RGD). A compositionally biased stretch (basic and acidic residues) spans 186-212 (KESREQDSRELAQHQSVENDSRPRFDS). N204 and N242 each carry an N-linked (GlcNAc...) asparagine glycan. Positions 233-246 (ASRSAVDTSNQTLE) are enriched in polar residues. Over residues 252-264 (EDRHSIENNEVTR) the composition is skewed to basic and acidic residues.

The protein belongs to the osteopontin family. In terms of processing, extensively phosphorylated on serine residues.

It localises to the secreted. Its function is as follows. Major non-collagenous bone protein that binds tightly to hydroxyapatite. Appears to form an integral part of the mineralized matrix. Probably important to cell-matrix interaction. In terms of biological role, acts as a cytokine involved in enhancing production of interferon-gamma and interleukin-12 and reducing production of interleukin-10 and is essential in the pathway that leads to type I immunity. In Gallus gallus (Chicken), this protein is Osteopontin (SPP1).